A 291-amino-acid chain; its full sequence is Undecaprenyl-diphosphatase (291 aa).

A run of 8 helical transmembrane segments spans residues 1-21 (MFII…LTEF), 48-68 (SAFT…AWVF), 102-122 (LHVL…DDFI), 126-146 (LFSV…MIIA), 162-182 (INYF…WPGF), 203-223 (SDFT…LSLL), 231-251 (IADI…GLIA), and 267-287 (FAIY…GFGI).

It belongs to the UppP family.

It localises to the cell membrane. The catalysed reaction is di-trans,octa-cis-undecaprenyl diphosphate + H2O = di-trans,octa-cis-undecaprenyl phosphate + phosphate + H(+). Its function is as follows. Catalyzes the dephosphorylation of undecaprenyl diphosphate (UPP). Confers resistance to bacitracin. This is Undecaprenyl-diphosphatase from Staphylococcus aureus (strain Mu3 / ATCC 700698).